A 200-amino-acid polypeptide reads, in one-letter code: LexA repressor (200 aa).

Residues 28–48 constitute a DNA-binding region (H-T-H motif); it reads RAEIAEILGFKSANAAEEHLK. Catalysis depends on for autocatalytic cleavage activity residues Ser118 and Lys155.

Belongs to the peptidase S24 family. In terms of assembly, homodimer.

The enzyme catalyses Hydrolysis of Ala-|-Gly bond in repressor LexA.. In terms of biological role, represses a number of genes involved in the response to DNA damage (SOS response), including recA and lexA. In the presence of single-stranded DNA, RecA interacts with LexA causing an autocatalytic cleavage which disrupts the DNA-binding part of LexA, leading to derepression of the SOS regulon and eventually DNA repair. The polypeptide is LexA repressor (Teredinibacter turnerae (strain ATCC 39867 / T7901)).